Consider the following 252-residue polypeptide: uncharacterized protein (252 aa).

16 to 40 is an NADP(+) binding site; sequence LVTGASDGIGREAAMTYARYGATVI. Position 152 (Ser152) interacts with substrate. Tyr165 acts as the Proton acceptor in catalysis.

The protein belongs to the short-chain dehydrogenases/reductases (SDR) family.

This is an uncharacterized protein from Escherichia coli (strain K12).